Reading from the N-terminus, the 523-residue chain is Succinate-semialdehyde dehydrogenase, mitochondrial (523 aa).

A mitochondrion-targeting transit peptide spans 1–35 (MATCFLLRSFWAARPALPPPGRFRPEPAGTPRRSY). Residue Lys74 is modified to N6-acetyllysine. Lys114 carries the N6-acetyllysine; alternate modification. Lys114 is subject to N6-succinyllysine; alternate. At Lys123 the chain carries N6-succinyllysine. Position 128 is an N6-acetyllysine (Lys128). N6-succinyllysine is present on Lys172. NAD(+) contacts are provided by residues Arg201 and 216-219 (KPAE). Residue Arg201 participates in substrate binding. Position 253 is an N6-acetyllysine; alternate (Lys253). At Lys253 the chain carries N6-succinyllysine; alternate. 272–277 (GSTATG) contributes to the NAD(+) binding site. Glu294 functions as the Proton acceptor in the catalytic mechanism. A substrate-binding site is contributed by Arg322. The Nucleophile role is filled by Cys328. Cys328 and Cys330 are oxidised to a cystine. An N6-acetyllysine; alternate modification is found at Lys347. Lys347 is modified (N6-succinyllysine; alternate). Lys353 carries the post-translational modification N6-acetyllysine. Lys390 carries the N6-succinyllysine modification. N6-acetyllysine is present on Lys399. Ser403 is modified (phosphoserine). Ser486 contributes to the substrate binding site. Ser487 bears the Phosphoserine mark.

The protein belongs to the aldehyde dehydrogenase family. Homotetramer.

Its subcellular location is the mitochondrion. It carries out the reaction succinate semialdehyde + NAD(+) + H2O = succinate + NADH + 2 H(+). It participates in amino-acid degradation; 4-aminobutanoate degradation. Redox-regulated. Inhibited under oxydizing conditions. Catalyzes one step in the degradation of the inhibitory neurotransmitter gamma-aminobutyric acid (GABA). In Mus musculus (Mouse), this protein is Succinate-semialdehyde dehydrogenase, mitochondrial (Aldh5a1).